The chain runs to 507 residues: ATP synthase subunit alpha, chloroplastic (507 aa).

Position 170-177 (170-177) interacts with ATP; sequence GDRQTGKT.

Belongs to the ATPase alpha/beta chains family. As to quaternary structure, F-type ATPases have 2 components, CF(1) - the catalytic core - and CF(0) - the membrane proton channel. CF(1) has five subunits: alpha(3), beta(3), gamma(1), delta(1), epsilon(1). CF(0) has four main subunits: a, b, b' and c.

It localises to the plastid. Its subcellular location is the chloroplast thylakoid membrane. The enzyme catalyses ATP + H2O + 4 H(+)(in) = ADP + phosphate + 5 H(+)(out). Functionally, produces ATP from ADP in the presence of a proton gradient across the membrane. The alpha chain is a regulatory subunit. The sequence is that of ATP synthase subunit alpha, chloroplastic from Vitis vinifera (Grape).